The sequence spans 1253 residues: MSCTASYAGMTTPVKDKEGHGIPCLQPIDVVECTYQYFTKSRNKLSLRVGDLIYVLTKGSNGWWDGVLIRHSANNNNNNSLILDRGWFPPSFTRSILNELHGVPDIGNELEIFQAGLNLKLELSSNPVILSLEDFLDCCRDIEFKEQLAWSPTPVHERKGCCELLYYNQDLDVYCRTLPYLPQNQVETVNDYSSFPAISKIAGKKMPITSSPDLFYLNDCDVVYWYDLTRLVCHYVNLTERDLLANEREKFLTSLDLLTAQITYVYMLFRNLRLVEDSFKKTLKKLIYTLSRFSINANIWFHSTSFEEREAIASQKDPERRSPLLQSILGTFQKFHFLLRLLHFLSNPNELTILPQLTPRFFKDSFNTISWNNPFLRTVFNQHMSMTLPRQMIKAVAGASGIVAENIDEIPASKQGTFISSETSHHSPSAPFQRRRRGTIFSNVSGSSDESDTIWSKRKKPYPLNEETLSLVRARKKQLDGKLKQMIKSANEYLSNTANFSKMLNFEMNFKTYEEVSGTIPIIDILENLDLTIFLNLRELGDENRVFDEDVAIGDEDKEFLKHSLSSLSYILSDYFNMKQYFHDVVVKFIIVAQHLTLEDPFVFSPMQNDLPTGYYEPMKPSSLNLDNAKDKKNGSQNTDIQEEEDEYEPDPDSLILFHNLINQDSDFNDLKFFNLAHVFKKSCDDYFDVLKLAIEFVNQLILERENLLNYAARMMKNNITELLLRGEEGYGSYDGGETAEKSDTNAVYADSDTKDNDEWRDSQVKLPRYLQREYDSELIWGPIVRIKGGSKHALISYLTDNEKKDLFFNITFLITFRSIFTTTEFLSYLISQYNLDPPEDLCFEEYNEWVTKKLIPVKCRVVEIMTTFFKQYWFPGYDEPDLATLNLDYFAQVAIKENITGSVELLKEVNQKFKLGNIQEATAPMKTLDQQICQDHYSGTLYSTTESILAVDPVLFATQLTILEHEIYCEITIFDCLQKIWKNKYTKSYGASPGLNEFISFANKLTNFISYSVVKEADKSKRAKLLSHFIFIAEYCRKFNNFSSMTAIISALYSSPIYRLEKTWQAVIPQTRDLLQSLNKLMDPKKNFINYRNELKSLHSAPCVPFFGVYLSDLTFTDSGNPDYLVLEHGLKGVHDEKKYINFNKRSRLVDILQEIIYFKKTHYDFTKDRTVIECISNSLENIPHIEKQYQLSLIIEPKPRKKVVPNSNSNNKSQEKSRDDQTDEGKTSTKKDRFPKFQLHKTKKKAPKVSK.

Residues 26 to 98 (QPIDVVECTY…PPSFTRSILN (73 aa)) enclose the SH3 domain. Positions 624-649 (LNLDNAKDKKNGSQNTDIQEEEDEYE) are disordered. The region spanning 782–914 (GPIVRIKGGS…ELLKEVNQKF (133 aa)) is the N-terminal Ras-GEF domain. Residues 952–1199 (VDPVLFATQL…QYQLSLIIEP (248 aa)) enclose the Ras-GEF domain. Residues 1202–1253 (RKKVVPNSNSNNKSQEKSRDDQTDEGKTSTKKDRFPKFQLHKTKKKAPKVSK) are disordered. The span at 1215–1237 (SQEKSRDDQTDEGKTSTKKDRFP) shows a compositional bias: basic and acidic residues. The segment covering 1240 to 1253 (QLHKTKKKAPKVSK) has biased composition (basic residues).

Promotes the exchange of Ras-bound GDP by GTP. This chain is Guanine nucleotide exchange factor SDC25 (SDC25), found in Saccharomyces cerevisiae (Baker's yeast).